The sequence spans 225 residues: Ureidoacrylate amidohydrolase RutB (225 aa).

Catalysis depends on Asp22, which acts as the Proton acceptor. The active site involves Lys131. Catalysis depends on Cys164, which acts as the Nucleophile.

The protein belongs to the isochorismatase family. RutB subfamily.

It catalyses the reaction (Z)-3-ureidoacrylate + H2O + H(+) = (Z)-3-aminoacrylate + NH4(+) + CO2. The catalysed reaction is (Z)-3-ureidoacrylate + H2O = (Z)-3-aminoacrylate + carbamate + H(+). The enzyme catalyses (Z)-2-methylureidoacrylate + H2O + H(+) = (Z)-2-methylaminoacrylate + NH4(+) + CO2. Its function is as follows. Hydrolyzes ureidoacrylate to form aminoacrylate and carbamate. The carbamate hydrolyzes spontaneously, thereby releasing one of the nitrogen atoms of the pyrimidine ring as ammonia and one of its carbon atoms as CO2. The polypeptide is Ureidoacrylate amidohydrolase RutB (Caulobacter vibrioides (strain ATCC 19089 / CIP 103742 / CB 15) (Caulobacter crescentus)).